Reading from the N-terminus, the 475-residue chain is MAAKSQPSAPKTKSTSGLTNGNAAAQGQWGRAWEVDWFSLASVIFLLLFAPFIVYYFIMACDQYGCSLTVPVADLATGRARLADIWARTPPVTAKAAQIYTAWVTLQVLLYMLLPDFCHKFLPGYVGGVQEGAVTPAGAVNKYEINGLQAWLLTHLLWFANAHLLGWFSPTIIFDNWIPLLWCANILGYTVSTFAMVKGYLFPTDARECKFTGNFFYNYMMGVEFNPRIGKWFDFKLFFNGRPGIVAWTLINLSFAAKQQELYGHVTNSMVLVNILQAIYVLDFFWNETWYLKTIDICHDHFGWYLGWGDCVWLPYLYTLQGLYLVYHPVQLPTYYALGVLLLGLLGYYIFRMTNHQKDLFRRTDGRCLIWGRKPKAIECSYTSADGQRHHSKLLVSGFWGVARHFNYTGDLMGSLAYCLACGGGHLLPYFYIIFMAILLTHRCLRDEHRCANKYGRDWEHYTAAVPYRLLPGIF.

Residues 1-21 (MAAKSQPSAPKTKSTSGLTNG) form a disordered region. Serine 14 carries the phosphoserine modification. Transmembrane regions (helical) follow at residues 40-60 (LASV…FIMA), 151-173 (WLLT…PTII), 178-200 (IPLL…VKGY), 266-286 (VTNS…DFFW), 306-326 (LGWG…LYLV), and 331-351 (QLPT…YYIF). Residues lysine 358, arginine 362, leucine 395, tryptophan 400, and 407–408 (NY) contribute to the NADP(+) site. The helical transmembrane segment at 420–440 (LACGGGHLLPYFYIIFMAILL) threads the bilayer. Residues aspartate 447, 451–455 (CANKY), and tyrosine 462 contribute to the NADP(+) site.

The protein belongs to the ERG4/ERG24 family. Interacts with DHCR24; this interaction regulates DHCR7 activity. Interacts with TMEM147.

Its subcellular location is the endoplasmic reticulum membrane. The enzyme catalyses cholesterol + NADP(+) = 7-dehydrocholesterol + NADPH + H(+). It carries out the reaction 7-dehydrodesmosterol + NADPH + H(+) = desmosterol + NADP(+). The catalysed reaction is 5,6alpha-epoxy-5alpha-cholestan-3beta-ol + H2O = 5alpha-cholestane-3beta,5,6beta-triol. It catalyses the reaction 5,6beta-epoxy-5beta-cholestan-3beta-ol + H2O = 5alpha-cholestane-3beta,5,6beta-triol. The protein operates within steroid biosynthesis; cholesterol biosynthesis. Oxidoreductase that catalyzes the last step of the cholesterol synthesis pathway, which transforms cholesta-5,7-dien-3beta-ol (7-dehydrocholesterol,7-DHC) into cholesterol by reducing the C7-C8 double bond of its sterol core. Can also metabolize cholesta-5,7,24-trien-3beta-ol (7-dehydrodemosterol, 7-DHD) to desmosterol, which is then metabolized by the Delta(24)-sterol reductase (DHCR24) to cholesterol. Modulates ferroptosis (a form of regulated cell death driven by iron-dependent lipid peroxidation) through the metabolic breakdown of the anti-ferroptotic metabolites 7-DHC and 7-DHD which, when accumulated, divert the propagation of peroxyl radical-mediated damage from phospholipid components to its sterol core, protecting plasma and mitochondrial membranes from phospholipid autoxidation. Functionally, component of the microsomal antiestrogen binding site (AEBS), a multiproteic complex at the ER membrane that consists of an association between cholestenol Delta-isomerase/EBP and DHCR7. This complex is responsible for cholesterol-5,6-epoxide hydrolase (ChEH) activity, which consists in the hydration of cholesterol-5,6-epoxides (5,6-EC) into cholestane-3beta,5alpha,6beta-triol (CT). The precise role of each component of this complex has not been described yet. The protein is 7-dehydrocholesterol reductase (DHCR7) of Bos taurus (Bovine).